The following is a 106-amino-acid chain: Nucleoid-associated protein XAC1110 (106 aa).

Over residues 80 to 89 the composition is skewed to basic and acidic residues; that stretch reads KIDAESKDRM. Residues 80-106 are disordered; it reads KIDAESKDRMGSATAGMQLPPGMKLPF.

This sequence belongs to the YbaB/EbfC family. Homodimer.

The protein resides in the cytoplasm. Its subcellular location is the nucleoid. Its function is as follows. Binds to DNA and alters its conformation. May be involved in regulation of gene expression, nucleoid organization and DNA protection. The protein is Nucleoid-associated protein XAC1110 of Xanthomonas axonopodis pv. citri (strain 306).